A 515-amino-acid chain; its full sequence is Cytidine and dCMP deaminase domain-containing protein 1 (515 aa).

2 stretches are compositionally biased toward polar residues: residues 1-11 (MKEAGQMQNLE) and 18-27 (SVSTQTGSMT). Disordered regions lie at residues 1–27 (MKEA…GSMT) and 56–83 (RQKS…STDK). The span at 60–83 (QKNEEGKHGPLGDNEEMTRVSTDK) shows a compositional bias: basic and acidic residues. Positions 71 to 169 (GDNEEMTRVS…SLLTEASSSE (99 aa)) constitute a CMP/dCMP-type deaminase 1 domain. Positions 110, 135, and 138 each coordinate Zn(2+). The Nuclear export signal signature appears at 272–284 (NLRQNMKDLILLL). Positions 318 to 483 (EIARHCMVQA…LNPSEAYGLE (166 aa)) constitute a CMP/dCMP-type deaminase 2 domain. Histidine 399 contacts Zn(2+). The active-site Proton donor is the glutamate 401. Zn(2+)-binding residues include cysteine 427 and cysteine 430. The disordered stretch occupies residues 481–515 (GLEQNEPERRENGVLRPVPQKEEQHQDKKLRLGIH). Basic and acidic residues predominate over residues 486 to 515 (EPERRENGVLRPVPQKEEQHQDKKLRLGIH). The Bipartite nuclear localization signal signature appears at 489–511 (RRENGVLRPVPQKEEQHQDKKLR).

It belongs to the cytidine and deoxycytidylate deaminase family. The cofactor is Zn(2+).

It localises to the cytoplasm. The protein localises to the nucleus. It catalyses the reaction 2'-deoxycytidine + H2O + H(+) = 2'-deoxyuridine + NH4(+). The catalysed reaction is cytidine + H2O + H(+) = uridine + NH4(+). Functionally, catalyzes the deamination of cytidine and deoxycytidine into uridine and deoxyuridine, respectively. May play an important role in testicular development and spermatogenesis. This Macaca fascicularis (Crab-eating macaque) protein is Cytidine and dCMP deaminase domain-containing protein 1 (CDADC1).